We begin with the raw amino-acid sequence, 235 residues long: Small ribosomal subunit protein uS2 (235 aa).

The protein belongs to the universal ribosomal protein uS2 family.

This is Small ribosomal subunit protein uS2 from Thermoanaerobacter pseudethanolicus (strain ATCC 33223 / 39E) (Clostridium thermohydrosulfuricum).